The following is a 340-amino-acid chain: Aliphatic sulfonates import ATP-binding protein SsuB 1 (340 aa).

The disordered stretch occupies residues 44-72 (THHHARVAAQGHARGDAQPPAGALARDDG). The ABC transporter domain maps to 80–299 (VQLRGVGKRY…ARASAGFAAL (220 aa)). 112–119 (GRSGCGKS) is an ATP binding site.

Belongs to the ABC transporter superfamily. Aliphatic sulfonates importer (TC 3.A.1.17.2) family. As to quaternary structure, the complex is composed of two ATP-binding proteins (SsuB), two transmembrane proteins (SsuC) and a solute-binding protein (SsuA).

The protein localises to the cell inner membrane. The catalysed reaction is ATP + H2O + aliphatic sulfonate-[sulfonate-binding protein]Side 1 = ADP + phosphate + aliphatic sulfonateSide 2 + [sulfonate-binding protein]Side 1.. Functionally, part of the ABC transporter complex SsuABC involved in aliphatic sulfonates import. Responsible for energy coupling to the transport system. The protein is Aliphatic sulfonates import ATP-binding protein SsuB 1 of Paraburkholderia xenovorans (strain LB400).